The following is a 186-amino-acid chain: MTDCSRCAGTTTSGPNHWSERIRDIADFPKQGIVFKDITPLLSDGPDFASALDEMAQPWRTTPLDAVLGIEARGFILGAALARELRTGFVPVRKPGKLPGRTLIQEYALEYGTDRIEMHEDALPRGARVLIVDDVLATGGTLRAALGLAAQLELEVVGAAVLVELQVLQGRQKWANDVPLLATLSY.

This sequence belongs to the purine/pyrimidine phosphoribosyltransferase family. As to quaternary structure, homodimer.

The protein resides in the cytoplasm. It catalyses the reaction AMP + diphosphate = 5-phospho-alpha-D-ribose 1-diphosphate + adenine. It functions in the pathway purine metabolism; AMP biosynthesis via salvage pathway; AMP from adenine: step 1/1. Functionally, catalyzes a salvage reaction resulting in the formation of AMP, that is energically less costly than de novo synthesis. This chain is Adenine phosphoribosyltransferase, found in Xanthomonas euvesicatoria pv. vesicatoria (strain 85-10) (Xanthomonas campestris pv. vesicatoria).